We begin with the raw amino-acid sequence, 574 residues long: VAO-type flavoprotein oxidase VAO615 (574 aa).

Residues 1–17 (MPASLLRFLALAGTAVG) form the signal peptide. 4 disulfide bridges follow: cysteine 28–cysteine 572, cysteine 64–cysteine 77, cysteine 108–cysteine 118, and cysteine 450–cysteine 476. N-linked (GlcNAc...) asparagine glycosylation is present at asparagine 47. N-linked (GlcNAc...) asparagine glycosylation is present at asparagine 105. In terms of domain architecture, FAD-binding PCMH-type spans 120 to 299 (LGNYPSYVVN…LSMTARLHRD (180 aa)). Asparagine 129, asparagine 211, asparagine 310, asparagine 346, and asparagine 438 each carry an N-linked (GlcNAc...) asparagine glycan. A cross-link (6-(S-cysteinyl)-8alpha-(pros-histidyl)-FAD (His-Cys)) is located at residues 157–222 (HDYLGKSTGK…TGHRIVGGTC (66 aa)).

The protein belongs to the oxygen-dependent FAD-linked oxidoreductase family. FAD is required as a cofactor. In terms of processing, the FAD cofactor is bound via a bicovalent 6-S-cysteinyl, 8alpha-N1-histidyl FAD linkage.

The protein resides in the secreted. Its function is as follows. Probably oxidoreductase that, when reduced, rapidly reacts with molecular oxygen, a hallmark of flavoprotein oxidases. A large panel of alcohols, including carbohydrates, steroids and secondary alcohols were tested as potential substrates, but none has been identified so far. This is VAO-type flavoprotein oxidase VAO615 from Thermothelomyces thermophilus (strain ATCC 42464 / BCRC 31852 / DSM 1799) (Sporotrichum thermophile).